Reading from the N-terminus, the 75-residue chain is Movement protein TGBp3 (75 aa).

The Lumenal segment spans residues 1–2 (MR). A helical membrane pass occupies residues 3–23 (VLDLILALITAAVVGYTIALV). Over 24–75 (SNSGCYVHFDGRSATTTCPPGPWVESIANGLYTAGLARPHPEPECERRQSSW) the chain is Cytoplasmic.

It belongs to the Tymovirales TGBp3 protein family.

It localises to the host endoplasmic reticulum membrane. Plays a role in viral cell-to-cell propagation, by facilitating genome transport to neighboring plant cells through plasmosdesmata. May induce the formation of granular vesicles derived from the Endoplasmic reticulum, which align on actin filaments. In Strawberry mild yellow edge-associated virus (SMYEaV), this protein is Movement protein TGBp3.